The chain runs to 315 residues: Glycerol-3-phosphate dehydrogenase [NAD(P)+] (315 aa).

Positions 24, 44, 45, and 92 each coordinate NADPH. Residues K92 and G120 each coordinate sn-glycerol 3-phosphate. S124 is a binding site for NADPH. Sn-glycerol 3-phosphate is bound by residues K175, D228, S238, R239, and N240. K175 (proton acceptor) is an active-site residue. An NADPH-binding site is contributed by R239. E265 is an NADPH binding site.

Belongs to the NAD-dependent glycerol-3-phosphate dehydrogenase family.

The protein localises to the cytoplasm. It carries out the reaction sn-glycerol 3-phosphate + NAD(+) = dihydroxyacetone phosphate + NADH + H(+). It catalyses the reaction sn-glycerol 3-phosphate + NADP(+) = dihydroxyacetone phosphate + NADPH + H(+). Its pathway is membrane lipid metabolism; glycerophospholipid metabolism. Its function is as follows. Catalyzes the reduction of the glycolytic intermediate dihydroxyacetone phosphate (DHAP) to sn-glycerol 3-phosphate (G3P), the key precursor for phospholipid synthesis. This is Glycerol-3-phosphate dehydrogenase [NAD(P)+] from Synechococcus sp. (strain JA-2-3B'a(2-13)) (Cyanobacteria bacterium Yellowstone B-Prime).